The following is a 1096-amino-acid chain: MDSIELKQLVPENDSEPGTPRQLLFQHYDISNEETIGIKPFKSIPAKVYILRVTEILTLGLLHLILTWLPEFRLKWIEAPCSNEDVEFVAISDPSGTSSIEKVSSICLKNDIQTSSFVLPSGKTRYFEYKKLRFYLEPLNLQWVLMPLETSAYSLVTSTPAYIQNGLDTFTIAKLRQVYGSNSLVSTKKSIVTILLNEVLHPFYLFQAVSVLIWLCDSFVFYSCCIVFISSYSIFLSVKESKESENRIHSIIGAPQPVTVIRNQVKQTVLADDLVIGDLLYFSNLDLKTCPVDGILFSSSCLLDESMVTGESVPARKFPLEDNSLDSWMIASCNIFSPHLIHAGTKFLKIDSTPSTPCLISVVRTGFRSNKGQLIRNLLYPNLRPSQLYLDSMSFLKTMAILSFVSIVFIAIYLNLYNASFGHVVLRSLDVLTILVPPALPATLSVGIANSIARLSRALIYTTSPESIHNAGCLSTFVFDKTGTLTENSVQLSCVYVKSGSNGLLKQVDADSLSLDSTKLNAHAYRVATCSQSLELVGNELVGDPLEVTLFTQFNGTFCATIRASNTPHPPLFSVSNSFDGPSQIFSIYKALEFDPVLRRMSVICSTSTERSLMLFTKGAPESILAISSQQSIPSNVQEVIHTLSSKGFRIIAFASKNLITPLQELIHLSRSTLESNVTFQGLFVLESPLRESSKDVISSLLRSKMEVSICSGDSLFTSVFVAKHCGALDSCNFIYTAELADSGDDCPQIHFEKIDLQTQNFQPIPDGFSLKDVILEKDSSLCMDGKLLQRLLTMLSFNEIKILLSKLRVLARMSPFDKATYVELCQKYGCKVGFCGDGANDCIALKQADVGVSLSDSEACAAASFVSKKKSIKDVFNVLLEGRCSLILSHRCFQYMVLCAIVQFSGVFFLYLKNYNFNDNQFLFMDLLIIFPLSAAMSYFDPAQNLTSNRPNSTLFGKGRVKDLGIQSVLIWLSHGLLTLILHELNWVELPEWQLEKSNTKNVLVTSIFLLSSLQYLGICIGINQSSEFLSPIWKKKTYVCLCTTIGLCNIYLCFANENHIISRCLQITRLPTLYRFIILFMGVISCCLTSILNM.

The Cytoplasmic segment spans residues 1–19 (MDSIELKQLVPENDSEPGT). The chain crosses the membrane as a helical span at residues 20–41 (PRQLLFQHYDISNEETIGIKPF). Over 42–47 (KSIPAK) the chain is Lumenal. The chain crosses the membrane as a helical span at residues 48–70 (VYILRVTEILTLGLLHLILTWLP). Topologically, residues 71–193 (EFRLKWIEAP…LVSTKKSIVT (123 aa)) are cytoplasmic. The helical transmembrane segment at 194 to 216 (ILLNEVLHPFYLFQAVSVLIWLC) threads the bilayer. At 217-220 (DSFV) the chain is on the lumenal side. A helical transmembrane segment spans residues 221–238 (FYSCCIVFISSYSIFLSV). Residues 239-391 (KESKESENRI…NLRPSQLYLD (153 aa)) lie on the Cytoplasmic side of the membrane. The chain crosses the membrane as a helical span at residues 392–412 (SMSFLKTMAILSFVSIVFIAI). The Lumenal portion of the chain corresponds to 413 to 425 (YLNLYNASFGHVV). The helical transmembrane segment at 426–447 (LRSLDVLTILVPPALPATLSVG) threads the bilayer. Residues 448–895 (IANSIARLSR…SLILSHRCFQ (448 aa)) are Cytoplasmic-facing. The active-site 4-aspartylphosphate intermediate is the Asp480. 2 residues coordinate Mg(2+): Asp838 and Asp842. The chain crosses the membrane as a helical span at residues 896-915 (YMVLCAIVQFSGVFFLYLKN). Topologically, residues 916–922 (YNFNDNQ) are lumenal. Residues 923 to 940 (FLFMDLLIIFPLSAAMSY) form a helical membrane-spanning segment. Over 941–958 (FDPAQNLTSNRPNSTLFG) the chain is Cytoplasmic. A helical membrane pass occupies residues 959 to 982 (KGRVKDLGIQSVLIWLSHGLLTLI). Residues 983–1003 (LHELNWVELPEWQLEKSNTKN) lie on the Lumenal side of the membrane. Residues 1004–1026 (VLVTSIFLLSSLQYLGICIGINQ) form a helical membrane-spanning segment. Residues 1027-1040 (SSEFLSPIWKKKTY) lie on the Cytoplasmic side of the membrane. The helical transmembrane segment at 1041 to 1060 (VCLCTTIGLCNIYLCFANEN) threads the bilayer. Residues 1061 to 1075 (HIISRCLQITRLPTL) are Lumenal-facing. Residues 1076-1096 (YRFIILFMGVISCCLTSILNM) traverse the membrane as a helical segment.

It belongs to the cation transport ATPase (P-type) (TC 3.A.3) family. Type V subfamily.

Its subcellular location is the endoplasmic reticulum membrane. The protein resides in the golgi apparatus membrane. The catalysed reaction is ATP + H2O = ADP + phosphate + H(+). In terms of biological role, plays a role in regulating calcium and manganese homeostasis responsible for cell cycle progression. The sequence is that of Cation-transporting ATPase 5 (cta5) from Schizosaccharomyces pombe (strain 972 / ATCC 24843) (Fission yeast).